A 147-amino-acid chain; its full sequence is Large ribosomal subunit protein uL13 (147 aa).

It belongs to the universal ribosomal protein uL13 family. Part of the 50S ribosomal subunit.

Functionally, this protein is one of the early assembly proteins of the 50S ribosomal subunit, although it is not seen to bind rRNA by itself. It is important during the early stages of 50S assembly. The sequence is that of Large ribosomal subunit protein uL13 from Lactobacillus acidophilus (strain ATCC 700396 / NCK56 / N2 / NCFM).